A 166-amino-acid polypeptide reads, in one-letter code: Lipoprotein signal peptidase (166 aa).

Transmembrane regions (helical) follow at residues 9 to 29, 45 to 65, 71 to 91, and 100 to 120; these read ASGALAPWLGISLIVILFDQL, ALTSFFSLVLVYNRGAAFGFL, WQRWAFTALGIGATLVICFLL, and FSLSLALILGGALGNVIDRLV. Active-site residues include Asp-126 and Asp-144. The helical transmembrane segment at 135 to 155 threads the bilayer; sequence WHFPAFNLADSAITVGAVLLV.

The protein belongs to the peptidase A8 family.

The protein localises to the cell inner membrane. The enzyme catalyses Release of signal peptides from bacterial membrane prolipoproteins. Hydrolyzes -Xaa-Yaa-Zaa-|-(S,diacylglyceryl)Cys-, in which Xaa is hydrophobic (preferably Leu), and Yaa (Ala or Ser) and Zaa (Gly or Ala) have small, neutral side chains.. The protein operates within protein modification; lipoprotein biosynthesis (signal peptide cleavage). In terms of biological role, this protein specifically catalyzes the removal of signal peptides from prolipoproteins. In Burkholderia ambifaria (strain MC40-6), this protein is Lipoprotein signal peptidase.